Here is a 469-residue protein sequence, read N- to C-terminus: Ribosomal protein uS12 methylthiotransferase RimO (469 aa).

One can recognise an MTTase N-terminal domain in the interval 17–132 (PRVGFVSLGC…VMDAVHLNLP (116 aa)). [4Fe-4S] cluster-binding residues include Cys-26, Cys-62, Cys-91, Cys-167, Cys-171, and Cys-174. The 243-residue stretch at 153–395 (LTPKHYAYLK…AVAEEVSSLK (243 aa)) folds into the Radical SAM core domain. In terms of domain architecture, TRAM spans 397-469 (QQRVGATMQV…QGHDLVAIPV (73 aa)).

Belongs to the methylthiotransferase family. RimO subfamily. [4Fe-4S] cluster serves as cofactor.

It is found in the cytoplasm. It catalyses the reaction L-aspartate(89)-[ribosomal protein uS12]-hydrogen + (sulfur carrier)-SH + AH2 + 2 S-adenosyl-L-methionine = 3-methylsulfanyl-L-aspartate(89)-[ribosomal protein uS12]-hydrogen + (sulfur carrier)-H + 5'-deoxyadenosine + L-methionine + A + S-adenosyl-L-homocysteine + 2 H(+). Functionally, catalyzes the methylthiolation of an aspartic acid residue of ribosomal protein uS12. This Polaromonas sp. (strain JS666 / ATCC BAA-500) protein is Ribosomal protein uS12 methylthiotransferase RimO.